The sequence spans 1091 residues: Error-prone DNA polymerase 1 (1091 aa).

Residues 1051–1064 are compositionally biased toward basic and acidic residues; it reads RGDEFHHGMPDDHR. The tract at residues 1051–1080 is disordered; that stretch reads RGDEFHHGMPDDHRAIRKRPPPSNHDDDEV.

This sequence belongs to the DNA polymerase type-C family. DnaE2 subfamily.

It is found in the cytoplasm. It catalyses the reaction DNA(n) + a 2'-deoxyribonucleoside 5'-triphosphate = DNA(n+1) + diphosphate. Its function is as follows. DNA polymerase involved in damage-induced mutagenesis and translesion synthesis (TLS). It is not the major replicative DNA polymerase. This is Error-prone DNA polymerase 1 from Agrobacterium fabrum (strain C58 / ATCC 33970) (Agrobacterium tumefaciens (strain C58)).